We begin with the raw amino-acid sequence, 604 residues long: MCGIVGVVGNRNATDILMQGLEKLEYRGYDSAGIFVANANQTNLIKSVGRIADLRAKIGIDVAGSTGIGHTRWATHGQSTEDNAHPHTSQTGRFVLVHNGVIENYLHIKTEFLAGHDFKGQTDTEIAVHLIGKFVEEDKLSVLEAFKKALSIIEGSYAFALMDSQATDTIYVAKNKSPLLIGLGEGYNMVCSDAMAMIRETSEFMEIHDKELVILTKDKVTVTDYDGKELIRDSYTAELDLSDIGKGTYPFYMLKEIDEQPTVMRQLISTYADETGNVQVDPAIITSIQEADRLYILAAGTSYHAGFATKNMLEQLTDTPVELGVASEWGYHMPLLSKKPMFILLSQSGETADSRQVLVKANAMGIPSLTVTNVPGSTLSRESTYTMLIHAGPEIAVASTKAYTAQIAALAFLAKAVGEANGKQEALDFNLVHELSLVAQSIEATLSEKDLVAEKVQALLTTTRNAFYIGRGNDYYVAMEAALKLKEISYIQCEGFAAGELKHGTISLIEEDTPVIALISSSQLVASHTRGNIQEVAARGAHVLTVVEEGLDREGDDIIVNKVHPFLAPIAMVIPTQLIAYYASLQRGLDVDKPRNLAKAVTVE.

The active-site Nucleophile; for GATase activity is Cys2. The Glutamine amidotransferase type-2 domain maps to 2–218 (CGIVGVVGNR…DKELVILTKD (217 aa)). 2 consecutive SIS domains span residues 284 to 423 (IITS…ANGK) and 452 to 594 (VAEK…VDKP). Catalysis depends on Lys599, which acts as the For Fru-6P isomerization activity.

Homodimer.

The protein localises to the cytoplasm. The enzyme catalyses D-fructose 6-phosphate + L-glutamine = D-glucosamine 6-phosphate + L-glutamate. In terms of biological role, catalyzes the first step in hexosamine metabolism, converting fructose-6P into glucosamine-6P using glutamine as a nitrogen source. The chain is Glutamine--fructose-6-phosphate aminotransferase [isomerizing] from Streptococcus pyogenes serotype M3 (strain ATCC BAA-595 / MGAS315).